Here is a 555-residue protein sequence, read N- to C-terminus: Potassium-transporting ATPase potassium-binding subunit (555 aa).

10 helical membrane-spanning segments follow: residues 2–22 (IWVAVVITMLLFILVAKPTGI), 60–80 (QYALSLVLLNGFMIVVVYFVF), 130–150 (IGITFLMFAAPATTLALVMAF), 173–193 (VFLPIAFMAALVFVALGVPQT), 246–266 (MSNILQMMLMMLLPTALPFTY), 278–298 (ILFVSLFMVFLLGFITITTSE), 374–394 (AGFVNIIMYAIIAVFISGLMV), 412–432 (LIAVTILFHPLLILGFSALAL), 483–503 (LVMFLGRYFSLITMLAVAASL), and 525–545 (GIFIGTIVIVGALTFFPMLVL).

It belongs to the KdpA family. In terms of assembly, the system is composed of three essential subunits: KdpA, KdpB and KdpC.

The protein localises to the cell membrane. Functionally, part of the high-affinity ATP-driven potassium transport (or Kdp) system, which catalyzes the hydrolysis of ATP coupled with the electrogenic transport of potassium into the cytoplasm. This subunit binds the extracellular potassium ions and delivers the ions to the membrane domain of KdpB through an intramembrane tunnel. In Bacillus cereus (strain ATCC 10987 / NRS 248), this protein is Potassium-transporting ATPase potassium-binding subunit.